The chain runs to 460 residues: Sorting nexin-4 (460 aa).

The segment covering 1-16 (MTATEQQQDDFSNVSW) has biased composition (polar residues). Positions 1–53 (MTATEQQQDDFSNVSWSEHVHDQQTRSVPDAEEPGHDMNAPGTGLERDAPSLG) are disordered. The region spanning 56-178 (KLECTVDTPI…TFLESPDWNA (123 aa)) is the PX domain. Coiled coils occupy residues 238 to 266 (EKVIARVARREADLEVDLRDLAEQFQKLI), 306 to 337 (RDMQAYSIALKNLLKAREQKQLDYEQLTEYLN), and 374 to 403 (QARRERTRKLELRVEELTHEVESARKTSDM).

This sequence belongs to the sorting nexin family. As to quaternary structure, forms a complex with ATG20 and ATG17.

The protein resides in the cytoplasm. The protein localises to the membrane. It is found in the endosome membrane. Sorting nexin involved in the separation or division of vacuoles throughout the entire life cycle of the cells. Involved in retrieval of late-Golgi SNAREs from post-Golgi endosomes to the trans-Golgi network, for cytoplasm to vacuole transport (Cvt), and autophagy of large cargos including mitophagy, pexophagy and glycophagy. Autophagy is required for proper vegetative growth, asexual/sexual reproduction, and full virulence. Autophagy is particularly involved in the biosynthesis of deoxynivalenol (DON), an important virulence determinant. This Gibberella zeae (strain ATCC MYA-4620 / CBS 123657 / FGSC 9075 / NRRL 31084 / PH-1) (Wheat head blight fungus) protein is Sorting nexin-4.